A 310-amino-acid chain; its full sequence is Iron ABC transporter substrate-binding lipoprotein MtsA (310 aa).

The first 20 residues, 1-20 (MGKKMSLILGAFLSVFLLVA), serve as a signal peptide directing secretion. Cysteine 21 carries the N-palmitoyl cysteine lipid modification. Cysteine 21 is lipidated: S-diacylglycerol cysteine. The Fe(2+) site is built by histidine 68, histidine 140, glutamate 206, and aspartate 281.

This sequence belongs to the bacterial solute-binding protein 9 family. Lipoprotein receptor antigen (Lrai) subfamily.

It is found in the cell membrane. Functionally, part of the ATP-binding cassette (ABC) transport system MtsABC involved in iron import. Binds iron with high affinity and specificity and delivers it to the membrane permease for translocation into the cytoplasm. Has low affinity for Zn(2+) and Cu(2+). In Streptococcus pyogenes serotype M6 (strain ATCC BAA-946 / MGAS10394), this protein is Iron ABC transporter substrate-binding lipoprotein MtsA (mtsA).